A 355-amino-acid polypeptide reads, in one-letter code: 12-oxophytodienoate reductase-like protein (355 aa).

Residues 30-32 (ALT), Ala-63, and Gln-105 contribute to the FMN site. Position 175 to 178 (175 to 178 (NASS)) interacts with substrate. The active-site Proton donor is Tyr-181. Arg-265 contributes to the substrate binding site. FMN contacts are provided by residues Gly-288 and 309 to 310 (GR).

Belongs to the NADH:flavin oxidoreductase/NADH oxidase family. It depends on FMN as a cofactor. Weakly expressed in flowers and roots.

It is found in the cytoplasm. Its function is as follows. May be involved in the biosynthesis or metabolism of oxylipin signaling molecules. In Solanum lycopersicum (Tomato), this protein is 12-oxophytodienoate reductase-like protein (OPR2).